We begin with the raw amino-acid sequence, 238 residues long: Probable tetraspanin tspC (238 aa).

Residues 1 to 16 (MVNTRDFLPKTTHYLK) lie on the Cytoplasmic side of the membrane. The helical transmembrane segment at 17–37 (VPIIGLNAILWLLGLVLIVVG) threads the bilayer. At 38–69 (SVCISFFSNFKEFTKESGYKNALSNLTTSAPT) the chain is on the extracellular side. N-linked (GlcNAc...) asparagine glycosylation is present at Asn-62. A helical membrane pass occupies residues 70 to 90 (GVLVIGIFFILLTLVGCFVAY). At 91 to 93 (KEK) the chain is on the cytoplasmic side. The helical transmembrane segment at 94-114 (LVGLVLYTMLMLILLVVLIGI) threads the bilayer. Topologically, residues 115-197 (GGKALTLDKE…GIFTKQVSSK (83 aa)) are extracellular. 2 N-linked (GlcNAc...) asparagine glycosylation sites follow: Asn-143 and Asn-164. The helical transmembrane segment at 198 to 218 (LVLVGIAGVVIGCIEFVAMAL) threads the bilayer. Topologically, residues 219–238 (SLFLIIRICRSPRSRAYDQY) are cytoplasmic.

Belongs to the tetraspanin (TM4SF) family.

The protein resides in the membrane. The chain is Probable tetraspanin tspC (tspC) from Dictyostelium discoideum (Social amoeba).